The chain runs to 249 residues: Beta-crystallin B1 (249 aa).

The interval 1-49 (MSQPAVKASATAAVNPGPDGKGKGAPPPGPAPGSGPAQAPAQPMPAAKG) is disordered. At serine 2 the chain carries N-acetylserine. The tract at residues 2–55 (SQPAVKASATAAVNPGPDGKGKGAPPPGPAPGSGPAQAPAQPMPAAKGDLPPGS) is N-terminal arm. Positions 34–49 (SGPAQAPAQPMPAAKG) are enriched in low complexity. Beta/gamma crystallin 'Greek key' domains are found at residues 56-95 (YKLV…IVTS) and 96-140 (GPWV…RPIR). The segment at 141 to 145 (MDAQE) is connecting peptide. 2 consecutive Beta/gamma crystallin 'Greek key' domains span residues 146 to 187 (HKLC…RVSS) and 188 to 230 (GTWV…RRLR). The segment at 232–249 (RQWHREGCFPVLAAEPPK) is C-terminal arm.

Belongs to the beta/gamma-crystallin family. As to quaternary structure, homo/heterodimer, or complexes of higher-order. The structure of beta-crystallin oligomers seems to be stabilized through interactions between the N-terminal arms. Post-translationally, specific cleavages in the N-terminal arm occur during lens maturation and give rise to truncated forms, leading to impaired oligomerization and protein insolubilization.

Crystallins are the dominant structural components of the vertebrate eye lens. The sequence is that of Beta-crystallin B1 (CRYBB1) from Sus scrofa (Pig).